A 569-amino-acid chain; its full sequence is Endonuclease/exonuclease/phosphatase family domain-containing protein 1 (569 aa).

The interval 1–20 (MGSTLGCHRSIPRDPSDLSH) is disordered. G2 carries the N-myristoyl glycine lipid modification. Residues 11–20 (IPRDPSDLSH) show a composition bias toward basic and acidic residues. Residues S16, S21, and S25 each carry the phosphoserine modification. The HhH domain occupies 38 to 67 (ERLNINTATEEELMTLPGVTRAVARSIVEY). Residues S106, S110, S160, and S173 each carry the phosphoserine modification. The interval 200–224 (SRPPSTHTNGGLTFTAKPHPSPTSL) is disordered. The span at 202–211 (PPSTHTNGGL) shows a compositional bias: polar residues. The residue at position 265 (T265) is a Phosphothreonine. The tract at residues 548-569 (EVPRNGNGVTLEPSEANVKHER) is disordered.

This is Endonuclease/exonuclease/phosphatase family domain-containing protein 1 (Eepd1) from Rattus norvegicus (Rat).